A 468-amino-acid chain; its full sequence is Sorting and assembly machinery component 50 homolog B (468 aa).

The tract at residues 1–25 is disordered; the sequence is MGTVHARSLDPLPMNGPDFGSPDDA. The POTRA domain occupies 44-124; sequence VVVQRVHFEG…LDVTFEVTEL (81 aa).

The protein belongs to the SAM50/omp85 family. In terms of assembly, associates with the mitochondrial contact site and cristae organizing system (MICOS) complex (also known as MINOS or MitOS complex).

Its subcellular location is the mitochondrion outer membrane. Its function is as follows. May play a role in the maintenance of the structure of mitochondrial cristae. In Xenopus laevis (African clawed frog), this protein is Sorting and assembly machinery component 50 homolog B (samm50-b).